The chain runs to 217 residues: Vesicle transport through interaction with t-SNAREs homolog 1A (217 aa).

Residues 1 to 192 (MDVFERTEQN…TGIARRLATN (192 aa)) are Cytoplasmic-facing. Residues 36–97 (AVREVENDID…AQLQSSNQTN (62 aa)) are a coiled coil. The segment at 90-109 (LQSSNQTNSNPWSNAPDDYQ) is disordered. Positions 123–185 (SNMLDSTSDR…KSARKIMTGI (63 aa)) constitute a t-SNARE coiled-coil homology domain. The chain crosses the membrane as a helical; Anchor for type IV membrane protein span at residues 193 to 213 (KVILSIIILLLMGIIALIICL). Over 214–217 (KWLR) the chain is Vesicular.

This sequence belongs to the VTI1 family. In terms of assembly, component of the SNARE complex composed of syn7A, syn8A, vamp7A and vti1A.

It is found in the membrane. The protein localises to the cytoplasmic vesicle. The protein resides in the secretory vesicle membrane. It localises to the clathrin-coated vesicle membrane. Its subcellular location is the endosome membrane. It is found in the endoplasmic reticulum membrane. Functionally, V-SNARE that mediates vesicle transport pathways through interactions with t-SNAREs on the target membrane. These interactions are proposed to mediate aspects of the specificity of vesicle trafficking and to promote fusion of the lipid bilayers. This chain is Vesicle transport through interaction with t-SNAREs homolog 1A, found in Dictyostelium discoideum (Social amoeba).